The sequence spans 40 residues: U2-myrmicitoxin-Tb1a (40 aa).

Residues 1-3 (AEA) form the signal peptide. A propeptide spanning residues 4 to 29 (MAEAMADAMADAMADAMADAMAEAAA) is cleaved from the precursor. Arginine 39 bears the Arginine amide mark.

The protein belongs to the formicidae venom precursor-01 superfamily. In terms of tissue distribution, expressed by the venom gland.

The protein resides in the secreted. Venom protein with unknown function. Does not induce paralysis when a high dose is administered by intrathoracic injection into the blowfly Lucilia caesar. The protein is U2-myrmicitoxin-Tb1a of Tetramorium bicarinatum (Tramp ant).